Here is a 396-residue protein sequence, read N- to C-terminus: Probable glucan endo-1,6-beta-glucosidase B (396 aa).

A signal peptide spans 1 to 17 (MIRRLAAFSALSGLATA). Residue Asn-30 is glycosylated (N-linked (GlcNAc...) asparagine). Glu-219 functions as the Proton donor in the catalytic mechanism. Asn-272 is a glycosylation site (N-linked (GlcNAc...) asparagine). Glu-320 functions as the Nucleophile in the catalytic mechanism.

Belongs to the glycosyl hydrolase 5 (cellulase A) family.

The protein resides in the secreted. The enzyme catalyses Random hydrolysis of (1-&gt;6)-linkages in (1-&gt;6)-beta-D-glucans.. In terms of biological role, beta-glucanases participate in the metabolism of beta-glucan, the main structural component of the cell wall. Acts on lutean, pustulan and 1,6-oligo-beta-D-glucosides. This chain is Probable glucan endo-1,6-beta-glucosidase B (exgB), found in Aspergillus fumigatus (strain CBS 144.89 / FGSC A1163 / CEA10) (Neosartorya fumigata).